We begin with the raw amino-acid sequence, 1464 residues long: DNA polymerase III PolC-type (1464 aa).

The Exonuclease domain maps to 426 to 582 (YVVFDVETTG…YDAEATGRLL (157 aa)).

This sequence belongs to the DNA polymerase type-C family. PolC subfamily.

It is found in the cytoplasm. The enzyme catalyses DNA(n) + a 2'-deoxyribonucleoside 5'-triphosphate = DNA(n+1) + diphosphate. Functionally, required for replicative DNA synthesis. This DNA polymerase also exhibits 3' to 5' exonuclease activity. The protein is DNA polymerase III PolC-type of Streptococcus thermophilus (strain ATCC BAA-491 / LMD-9).